We begin with the raw amino-acid sequence, 147 residues long: Large ribosomal subunit protein bL9 (147 aa).

This sequence belongs to the bacterial ribosomal protein bL9 family.

Functionally, binds to the 23S rRNA. This is Large ribosomal subunit protein bL9 from Myxococcus xanthus (strain DK1622).